A 549-amino-acid polypeptide reads, in one-letter code: MLRRLAPLLAEFNFVPLVSKVSHKETKYRLLTKDYVSVVQPGAGLPEMLRVDPAALTLLSSTAFDDVEHLLRSSHLMSLRKIFDDPEASDNDKFVALQLLKNANISSARLLPGCQDTGTAIIAGYRGDQVFVPGNDEEALSRGVYDIFQKRNFRYSQNVPLSMYDEKNTGTNLPAQIDLYASKGMEYSFMFVAKGGGSANKSFLLQETKSVLNPKSLRNFLKEKLAMFGTSACPPYHVAVVIGGTSAEMTMKVLKYASCHYYDDLITKPDMKTGYTFRDLELEEEVLKVCQNIGMGAQFGGKYYAHDVRVIRMPRHGASCPIGIGVSCSADRQALGKINKDGVWLEELEMEPSQYLPDLKEDELLKTPAVMVNLNRPMPEVLQELSKHPVRTRLSLTGTIIVARDSAHARMREMLEAGKPLPQYMKEHPVYYAGPAKQPDGLPSGSFGPTTAGRMDPFVDLFQSHGGSMVMLAKGNRSKQVTKACHKYGGFYLGSIGGPAAVLAQNAIKKVECLDMKDLGMEAVWRIEVENFPAFIVVDDKGNDFFEQL.

Cys114 contacts [4Fe-4S] cluster. (S)-malate contacts are provided by residues Gln115–Asp116, Arg154, Gly197, and Asn200–Gln206. The [4Fe-4S] cluster site is built by Cys233 and Cys328. (S)-malate contacts are provided by residues Arg404, Thr450 to Arg454, and Lys474.

Belongs to the class-I fumarase family. Homodimer. [4Fe-4S] cluster serves as cofactor.

It is found in the mitochondrion. It catalyses the reaction (S)-malate = fumarate + H2O. It participates in carbohydrate metabolism; tricarboxylic acid cycle; (S)-malate from fumarate: step 1/1. With respect to regulation, specifically and competitively inhibited by 2-thiomalate, which coordinates with the catalytic [4Fe-4S] cluster. Catalyzes the reversible hydration of fumarate to (S)-malate. Catalyzes the hydration of fumarate to L-malate in the tricarboxylic acid (TCA) cycle to facilitate a transition step in the production of energy in the form of NADH. This Leishmania major protein is Fumarate hydratase 1, mitochondrial.